The sequence spans 356 residues: MSL complex subunit 3B (356 aa).

Residues 2 to 350 (EERTVTLEIP…SEVHYSTRNP (349 aa)) form the MRG domain. Disordered stretches follow at residues 135–210 (TNRS…WQQD) and 225–247 (KTPV…SPVF). Residues 142 to 156 (LSPSLRLLNPSRPQS) show a composition bias toward low complexity. Composition is skewed to polar residues over residues 178-189 (AVQSLRRSSPHT) and 229-243 (HSRS…SQEG).

It localises to the nucleus. Functionally, probable non-catalytic component of the MSL histone acetyltransferase complex, a multiprotein complex that mediates the majority of histone H4 acetylation at 'Lys-16' (H4K16ac), an epigenetic mark that prevents chromatin compaction. This Homo sapiens (Human) protein is MSL complex subunit 3B.